A 361-amino-acid polypeptide reads, in one-letter code: Protein SGT1 homolog (361 aa).

TPR repeat units follow at residues 3–36, 37–70, and 71–104; these read ASDL…GPAT, ADLY…DPTM, and HKAY…APGD. Threonine 150 carries the post-translational modification Phosphothreonine. The CS domain maps to 159–248; sequence KPKYRHDYYN…AEQVTWTTLD (90 aa). Residues 255-295 form a disordered region; the sequence is AIPQKISTPAETAPRPSYPSSKSKKDWDKLEAEVKKEEKEE. Threonine 262 is modified (phosphothreonine). Residues 271–361 enclose the SGS domain; that stretch reads SYPSSKSKKD…DGMELKKWEI (91 aa). Residues 277 to 295 show a composition bias toward basic and acidic residues; sequence SKKDWDKLEAEVKKEEKEE.

Belongs to the SGT1 family. Constitutively phosphorylated at Thr-262 and phosphorylated at Thr-150 upon infection with the fungal pathogen Ustilago maydis.

It localises to the cytoplasm. It is found in the nucleus. Functionally, may act as positive regulator of basal defense. May be involved in basal disease resistance to the fungal pathogen Ustilago maydis. The sequence is that of Protein SGT1 homolog from Zea mays (Maize).